We begin with the raw amino-acid sequence, 548 residues long: Membrane protein insertase YidC (548 aa).

A helical membrane pass occupies residues 6–26; the sequence is NLLVIALLFVSFMIWQAWEQD. The interval 28 to 54 is disordered; sequence NPQPQTQQTTQTTTTAAGSAADQGVPA. The segment covering 29 to 42 has biased composition (low complexity); sequence PQPQTQQTTQTTTT. The next 4 helical transmembrane spans lie at 350–370, 424–444, 458–478, and 499–519; these read FLGNWGFSIIVITFIVRGIMY, FPLIIQMPIFLALYYMLMGSI, LSAQDPYYILPILMGVTMFFI, and PVIFTVFFLWFPSGLVLYYIV.

It belongs to the OXA1/ALB3/YidC family. Type 1 subfamily. In terms of assembly, interacts with the Sec translocase complex via SecD. Specifically interacts with transmembrane segments of nascent integral membrane proteins during membrane integration.

The protein resides in the cell inner membrane. Required for the insertion and/or proper folding and/or complex formation of integral membrane proteins into the membrane. Involved in integration of membrane proteins that insert both dependently and independently of the Sec translocase complex, as well as at least some lipoproteins. Aids folding of multispanning membrane proteins. The chain is Membrane protein insertase YidC from Citrobacter koseri (strain ATCC BAA-895 / CDC 4225-83 / SGSC4696).